The following is a 155-amino-acid chain: RNA pyrophosphohydrolase (155 aa).

The Nudix hydrolase domain occupies glutamate 5–serine 149. The Nudix box signature appears at glycine 39 to glycine 60.

The protein belongs to the Nudix hydrolase family. RppH subfamily. A divalent metal cation serves as cofactor.

Its function is as follows. Accelerates the degradation of transcripts by removing pyrophosphate from the 5'-end of triphosphorylated RNA, leading to a more labile monophosphorylated state that can stimulate subsequent ribonuclease cleavage. The chain is RNA pyrophosphohydrolase from Zymomonas mobilis subsp. mobilis (strain ATCC 31821 / ZM4 / CP4).